A 467-amino-acid polypeptide reads, in one-letter code: Cilia- and flagella-associated protein 97 (467 aa).

Disordered stretches follow at residues 1 to 20, 76 to 235, 336 to 370, and 412 to 467; these read MDRY…FFDS, IAKP…DISP, RQAA…KEQQ, and ALSP…AAWQ. Acidic residues predominate over residues 124-135; sequence DNYYPDEEDSSE. The span at 162–177 shows a compositional bias: polar residues; the sequence is DFVSTISSSDTEYSDT. Positions 180-194 are enriched in low complexity; sequence DDGASKSSYQSSKGS. Basic and acidic residues predominate over residues 198–216; sequence SPERKPSRSSMRELRHYAE. Over residues 223-235 the composition is skewed to polar residues; sequence TDVTPLSTPDISP. Residues 310–387 are a coiled coil; the sequence is KKNFSFSNDE…ALLKRLESVK (78 aa). Positions 421-439 are enriched in low complexity; the sequence is SVSRLSPSVSSGGFSRMSS.

The protein belongs to the CFAP97 family.

In Xenopus tropicalis (Western clawed frog), this protein is Cilia- and flagella-associated protein 97.